The chain runs to 239 residues: Lactate utilization protein A (239 aa).

Belongs to the LutA/YkgE family.

Functionally, is involved in L-lactate degradation and allows cells to grow with lactate as the sole carbon source. This chain is Lactate utilization protein A, found in Bacillus cereus (strain B4264).